A 387-amino-acid chain; its full sequence is S-adenosylmethionine synthase (387 aa).

E8 is a binding site for Mg(2+). Residue H14 coordinates ATP. E42 is a K(+) binding site. The L-methionine site is built by E55 and Q98. ATP contacts are provided by residues 166 to 168 (DGK), 234 to 237 (SGRF), D245, 251 to 252 (RK), A268, K272, and K276. D245 contributes to the L-methionine binding site. K276 contributes to the L-methionine binding site.

Belongs to the AdoMet synthase family. As to quaternary structure, homotetramer. The cofactor is Mn(2+). Mg(2+) serves as cofactor. It depends on Co(2+) as a cofactor. Requires K(+) as cofactor.

The protein localises to the cytoplasm. It carries out the reaction L-methionine + ATP + H2O = S-adenosyl-L-methionine + phosphate + diphosphate. The protein operates within amino-acid biosynthesis; S-adenosyl-L-methionine biosynthesis; S-adenosyl-L-methionine from L-methionine: step 1/1. Its function is as follows. Catalyzes the formation of S-adenosylmethionine from methionine and ATP. The reaction comprises two steps that are both catalyzed by the same enzyme: formation of S-adenosylmethionine (AdoMet) and triphosphate, and subsequent hydrolysis of the triphosphate. The polypeptide is S-adenosylmethionine synthase (METK-1) (Ostreococcus lucimarinus (strain CCE9901)).